Reading from the N-terminus, the 159-residue chain is 2-C-methyl-D-erythritol 2,4-cyclodiphosphate synthase (159 aa).

A divalent metal cation is bound by residues D10 and H12. Residues 10 to 12 (DVH) and 37 to 38 (HS) each bind 4-CDP-2-C-methyl-D-erythritol 2-phosphate. H45 contacts a divalent metal cation. Residues 59–61 (DIG), 64–68 (FPDTD), 103–109 (AQAPKML), 135–138 (TTTE), F142, and R145 contribute to the 4-CDP-2-C-methyl-D-erythritol 2-phosphate site.

The protein belongs to the IspF family. Homotrimer. It depends on a divalent metal cation as a cofactor.

The catalysed reaction is 4-CDP-2-C-methyl-D-erythritol 2-phosphate = 2-C-methyl-D-erythritol 2,4-cyclic diphosphate + CMP. It functions in the pathway isoprenoid biosynthesis; isopentenyl diphosphate biosynthesis via DXP pathway; isopentenyl diphosphate from 1-deoxy-D-xylulose 5-phosphate: step 4/6. Its function is as follows. Involved in the biosynthesis of isopentenyl diphosphate (IPP) and dimethylallyl diphosphate (DMAPP), two major building blocks of isoprenoid compounds. Catalyzes the conversion of 4-diphosphocytidyl-2-C-methyl-D-erythritol 2-phosphate (CDP-ME2P) to 2-C-methyl-D-erythritol 2,4-cyclodiphosphate (ME-CPP) with a corresponding release of cytidine 5-monophosphate (CMP). This chain is 2-C-methyl-D-erythritol 2,4-cyclodiphosphate synthase, found in Francisella tularensis subsp. novicida (strain U112).